The chain runs to 614 residues: Aspartate--tRNA ligase (614 aa).

Glutamate 174 provides a ligand contact to L-aspartate. The interval 198 to 201 (QLFK) is aspartate. Arginine 220 contributes to the L-aspartate binding site. Residues 220 to 222 (RDE) and glutamine 229 contribute to the ATP site. Residue histidine 448 coordinates L-aspartate. ATP is bound at residue glutamate 482. Arginine 489 is a binding site for L-aspartate. 534–537 (GLDR) contacts ATP. The segment at 587-614 (YEDSVKETEQRLEKEAQEDADKNSTWDE) is disordered.

The protein belongs to the class-II aminoacyl-tRNA synthetase family. Type 1 subfamily. In terms of assembly, homodimer.

Its subcellular location is the cytoplasm. It catalyses the reaction tRNA(Asp) + L-aspartate + ATP = L-aspartyl-tRNA(Asp) + AMP + diphosphate. Its function is as follows. Catalyzes the attachment of L-aspartate to tRNA(Asp) in a two-step reaction: L-aspartate is first activated by ATP to form Asp-AMP and then transferred to the acceptor end of tRNA(Asp). This Lactobacillus johnsonii (strain CNCM I-12250 / La1 / NCC 533) protein is Aspartate--tRNA ligase.